We begin with the raw amino-acid sequence, 168 residues long: 3-isopropylmalate dehydratase small subunit 2 (168 aa).

Belongs to the LeuD family. LeuD type 2 subfamily. In terms of assembly, heterodimer of LeuC and LeuD.

It catalyses the reaction (2R,3S)-3-isopropylmalate = (2S)-2-isopropylmalate. Its pathway is amino-acid biosynthesis; L-leucine biosynthesis; L-leucine from 3-methyl-2-oxobutanoate: step 2/4. Its function is as follows. Catalyzes the isomerization between 2-isopropylmalate and 3-isopropylmalate, via the formation of 2-isopropylmaleate. In Methanopyrus kandleri (strain AV19 / DSM 6324 / JCM 9639 / NBRC 100938), this protein is 3-isopropylmalate dehydratase small subunit 2 (leuD2).